The sequence spans 161 residues: Bacterioferritin (161 aa).

The Ferritin-like diiron domain maps to 1-145 (MKGEPKVIER…TQLDLLAKIG (145 aa)). E18 and E51 together coordinate Fe cation. Residue M52 coordinates heme b. H54, E94, E127, and H130 together coordinate Fe cation.

The protein belongs to the bacterioferritin family. Homooligomer of 24 subunits, arranged as 12 dimers, that are packed together to form an approximately spherical molecule with a central cavity, in which large amounts of iron can be deposited. The cofactor is heme b.

It catalyses the reaction 4 Fe(2+) + O2 + 4 H(+) = 4 Fe(3+) + 2 H2O. It carries out the reaction Fe(2+)(in) = Fe(2+)(out). Functionally, iron-storage protein, whose ferroxidase center binds Fe(2+), oxidizes it using dioxygen to Fe(3+), and participates in the subsequent Fe(3+) oxide mineral core formation within the central cavity of the BFR protein shell. The protein is Bacterioferritin (bfr) of Brucella melitensis biotype 1 (strain ATCC 23456 / CCUG 17765 / NCTC 10094 / 16M).